Reading from the N-terminus, the 253-residue chain is Ubiquinone/menaquinone biosynthesis C-methyltransferase UbiE (253 aa).

S-adenosyl-L-methionine-binding positions include Thr-76, Asp-97, and 125-126 (NA).

Belongs to the class I-like SAM-binding methyltransferase superfamily. MenG/UbiE family.

The catalysed reaction is a 2-demethylmenaquinol + S-adenosyl-L-methionine = a menaquinol + S-adenosyl-L-homocysteine + H(+). The enzyme catalyses a 2-methoxy-6-(all-trans-polyprenyl)benzene-1,4-diol + S-adenosyl-L-methionine = a 5-methoxy-2-methyl-3-(all-trans-polyprenyl)benzene-1,4-diol + S-adenosyl-L-homocysteine + H(+). Its pathway is quinol/quinone metabolism; menaquinone biosynthesis; menaquinol from 1,4-dihydroxy-2-naphthoate: step 2/2. It functions in the pathway cofactor biosynthesis; ubiquinone biosynthesis. Methyltransferase required for the conversion of demethylmenaquinol (DMKH2) to menaquinol (MKH2) and the conversion of 2-polyprenyl-6-methoxy-1,4-benzoquinol (DDMQH2) to 2-polyprenyl-3-methyl-6-methoxy-1,4-benzoquinol (DMQH2). The protein is Ubiquinone/menaquinone biosynthesis C-methyltransferase UbiE of Rhodopseudomonas palustris (strain HaA2).